The following is a 280-amino-acid chain: MGSCVSRDLFTSAHKNCPMPQGADPLNPDLPSGRTPTVAPDCVIGKDKQMDFCWDPWQRCFQTTNGYLSDSRSRPGNYNVAALATSSLVGVVQSIKDHITKPTAMARGRVAHLIEWKGWSAQPAGWELSPAEDEHYCCLPDELREARFAAGVAEQFAITEATLSAWSSLDEEELHPENSPQGIVQLQDLESIYLQDSLPSGPSQDDSLQAFSSPSPSPDSCPSPEEPPSTAGIPQPPSPELQHRRRLPGAQGPEGGTHPPGSLPSMDSGSLWEEDEVFYN.

The segment at 195 to 280 is disordered; the sequence is QDSLPSGPSQ…LWEEDEVFYN (86 aa). Residues 197 to 211 are compositionally biased toward polar residues; sequence SLPSGPSQDDSLQAF. A compositionally biased stretch (pro residues) spans 215-227; that stretch reads SPSPDSCPSPEEP.

It belongs to the FAM131 family.

The sequence is that of Protein FAM131C (FAM131C) from Homo sapiens (Human).